The sequence spans 1112 residues: Patronin (microtubule-binding protein) homolog (1112 aa).

In terms of domain architecture, Calponin-homology (CH) spans 165–286 (IDSVDALLFW…VNAFLADLFV (122 aa)). 4 disordered regions span residues 324–358 (AARS…SRMS), 485–504 (EGED…QPSV), 542–566 (MQQQ…PSQL), and 788–834 (NHSE…GSGE). 2 stretches are compositionally biased toward polar residues: residues 345–358 (SHSQ…SRMS) and 489–504 (GTQS…QPSV). The span at 542-557 (MQQQMQQQQQQQAQAQ) shows a compositional bias: low complexity. Basic and acidic residues predominate over residues 802–816 (QNDRDDLSTGRKSDD). A coiled-coil region spans residues 850-914 (ALIAKTMKRK…YKRKKLEKEL (65 aa)). Residues 916–965 (AELSARSTGRGHSQPPFIRTKSQMSEVTESSRQNTPRMRGQSSVEQRVSV) are disordered. Over residues 935 to 951 (TKSQMSEVTESSRQNTP) the composition is skewed to polar residues. Low complexity predominate over residues 956–965 (QSSVEQRVSV). Residues 972 to 1109 (THKLYAKTVT…RIPHSGTPAH (138 aa)) enclose the CKK domain.

The protein belongs to the CAMSAP1 family. Interacts with dapk-1. In terms of tissue distribution, expressed in larval and adult epidermis, intestine and pharynx. Broadly expressed in the nervous system. Expressed in body wall muscle cells.

It is found in the cell projection. It localises to the axon. The protein localises to the dendrite. The protein resides in the cell membrane. Its subcellular location is the sarcolemma. It is found in the cytoplasm. It localises to the cytosol. The protein localises to the cytoskeleton. The protein resides in the perikaryon. Its function is as follows. Required for microtubule stability and anchorage by binding to the minus ends of microtubules. Acts redundantly with noca-1 to control circumferential microtubule assembly along the body which is necessary for larval development, viability, morphology and integrity of the epidermis. Promotes microtubule stability and polymerization in neurons. Involved in the maintenance of neurite morphology in ALM and PLM neurons. May play a role in synaptic protein localization in the PLM neuron. May act upstream of dlk-1 in neuronal regeneration. Plays a role in postembryonic epidermal tissue integrity and wound healing. The protein is Patronin (microtubule-binding protein) homolog of Caenorhabditis elegans.